A 483-amino-acid chain; its full sequence is Ero1-like protein (483 aa).

An N-terminal signal peptide occupies residues 1 to 29 (MTTRTVQRNLWASAAVVLVLLLLWTDTTG). 6 disulfide bridges follow: Cys44-Cys57, Cys46-Cys55, Cys94-Cys402, Cys103-Cys108, Cys227-Cys251, and Cys405-Cys408. Residues Arg206, Thr208, and Trp219 each coordinate FAD. Asn232 carries an N-linked (GlcNAc...) asparagine glycan. The FAD site is built by Ser262, His265, and Arg301. The N-linked (GlcNAc...) asparagine glycan is linked to Asn395.

It belongs to the EROs family. As to quaternary structure, may function both as a monomer and a homodimer. FAD is required as a cofactor.

It is found in the endoplasmic reticulum membrane. Oxidoreductase involved in disulfide bond formation in the endoplasmic reticulum. Efficiently reoxidizes pdi-1, the enzyme catalyzing protein disulfide formation, in order to allow pdi-1 to sustain additional rounds of disulfide formation. Following pdi reoxidation, passes its electrons to molecular oxygen via FAD, leading to the production of reactive oxygen species (ROS) in the cell. In Drosophila melanogaster (Fruit fly), this protein is Ero1-like protein (Ero1L).